The chain runs to 219 residues: Ras-related protein Rab-3B (219 aa).

Ala2 carries the post-translational modification N-acetylalanine. Residues Ser31, Ser32, Val33, Gly34, Lys35, Thr36, Ser37, Pro49, and Ser53 each coordinate GTP. Residue Thr36 participates in Mg(2+) binding. The short motif at Asp45–Asp58 is the Switch 1 element. Thr54 and Asp77 together coordinate Mg(2+). The Switch 2 motif lies at Thr78 to Met96. Gly80 is a GTP binding site. Thr86 is modified (phosphothreonine). Residues Asn135, Lys136, Asp138, Ala166, and Lys167 each coordinate GTP. 2 positions are modified to phosphoserine: Ser188 and Ser190. Residues Cys217 and Cys219 are each lipidated (S-geranylgeranyl cysteine). Residue Cys219 is modified to Cysteine methyl ester.

The protein belongs to the small GTPase superfamily. Rab family. In terms of assembly, interacts with RPH3A and RPH3AL. Interacts with RIMS1. Interacts with RIMS2. The GTP-bound form interacts with GAS8/DRC4 (via coiled-coil domains). Interacts with GDI2, and CHM; phosphorylation at Thr-86 disrupts these interactions. Interacts with MADD (via uDENN domain); the GTP-bound form is preferred for interaction. It depends on Mg(2+) as a cofactor. In terms of processing, phosphorylation of Thr-86 in the switch II region by LRRK2 prevents the association of RAB regulatory proteins, including CHM and RAB GDP dissociation inhibitor GDI2.

The protein resides in the cell membrane. The protein localises to the golgi apparatus. It catalyses the reaction GTP + H2O = GDP + phosphate + H(+). With respect to regulation, regulated by guanine nucleotide exchange factors (GEFs) which promote the exchange of bound GDP for free GTP. Regulated by GTPase activating proteins (GAPs) which increase the GTP hydrolysis activity. Inhibited by GDP dissociation inhibitors (GDIs) which prevent Rab-GDP dissociation. In terms of biological role, the small GTPases Rab are key regulators of intracellular membrane trafficking, from the formation of transport vesicles to their fusion with membranes. Rabs cycle between an inactive GDP-bound form and an active GTP-bound form that is able to recruit to membranes different sets of downstream effectors directly responsible for vesicle formation, movement, tethering and fusion. This chain is Ras-related protein Rab-3B, found in Rattus norvegicus (Rat).